The primary structure comprises 111 residues: Small ribosomal subunit protein bS16 (111 aa).

A disordered region spans residues 92 to 111 (EKGVKESNEIVEPEGEEVKE). The segment covering 100–111 (EIVEPEGEEVKE) has biased composition (acidic residues).

The protein belongs to the bacterial ribosomal protein bS16 family.

This Petrotoga mobilis (strain DSM 10674 / SJ95) protein is Small ribosomal subunit protein bS16.